The following is a 129-amino-acid chain: Ribosome-binding factor A (129 aa).

It belongs to the RbfA family. In terms of assembly, monomer. Binds 30S ribosomal subunits, but not 50S ribosomal subunits or 70S ribosomes.

Its subcellular location is the cytoplasm. One of several proteins that assist in the late maturation steps of the functional core of the 30S ribosomal subunit. Associates with free 30S ribosomal subunits (but not with 30S subunits that are part of 70S ribosomes or polysomes). Required for efficient processing of 16S rRNA. May interact with the 5'-terminal helix region of 16S rRNA. This Gloeobacter violaceus (strain ATCC 29082 / PCC 7421) protein is Ribosome-binding factor A.